A 743-amino-acid polypeptide reads, in one-letter code: Keratin, type I cytoskeletal 9 (743 aa).

Over residues 1-16 (MSCRQSSSSFWSSSSS) the composition is skewed to low complexity. The tract at residues 1–46 (MSCRQSSSSFWSSSSSCGGGGGRGGSGGSMRSSFSRSSRAGGGGGG) is disordered. The head stretch occupies residues 1–130 (MSCRQSSSSF…GGEGGILNTN (130 aa)). A phosphoserine mark is found at Ser-14 and Ser-16. The span at 17-28 (CGGGGGRGGSGG) shows a compositional bias: gly residues. Residues 29-39 (SMRSSFSRSSR) are compositionally biased toward low complexity. Residues Ser-55 and Ser-155 each carry the phosphoserine modification. The tract at residues 131–166 (EKIVMQNLNSRLASYMEKVLELEESNTAMEKQIQDW) is coil 1A. The region spanning 131–443 (EKIVMQNLNS…ELLEGGQQDF (313 aa)) is the IF rod domain. The tract at residues 167–185 (YSKRGPKVFQKDNTHYYDT) is linker 1. The segment at 186–277 (IEDLKDRIVD…KNHKEEMSQL (92 aa)) is coil 1B. The linker 12 stretch occupies residues 278–300 (TGQNDGDVNVEINVAPSTDLTRV). Positions 301-439 (LNDMREEYEQ…ETYRELLEGG (139 aa)) are coil 2. Disordered stretches follow at residues 440–468 (QQDFESSGAGQIGFGSGKGRQRGSGGSYG) and 501–743 (GGSG…KMRY). Positions 440-709 (QQDFESSGAG…GGGSGSGGGS (270 aa)) are tail. Composition is skewed to gly residues over residues 449–468 (GQIGFGSGKGRQRGSGGSYG) and 501–717 (GGSG…GGGN).

This sequence belongs to the intermediate filament family. As to quaternary structure, heterotetramer of two type I and two type II keratins. Expressed in footpad epidermis and testis (at protein level).

May serve an important special function either in the mature palmar and plantar skin tissue or in the morphogenetic program of the formation of these tissues. Plays a role in keratin filament assembly. Plays an essential role in the correct development of sperm. The protein is Keratin, type I cytoskeletal 9 of Mus musculus (Mouse).